We begin with the raw amino-acid sequence, 226 residues long: UPF0111 protein AF_1799 (226 aa).

It belongs to the UPF0111 family.

The sequence is that of UPF0111 protein AF_1799 from Archaeoglobus fulgidus (strain ATCC 49558 / DSM 4304 / JCM 9628 / NBRC 100126 / VC-16).